The following is a 149-amino-acid chain: Large ribosomal subunit protein bL9 (149 aa).

This sequence belongs to the bacterial ribosomal protein bL9 family.

Binds to the 23S rRNA. This chain is Large ribosomal subunit protein bL9, found in Klebsiella pneumoniae (strain 342).